The chain runs to 573 residues: Protein FAM227B (573 aa).

Residues Asp-429 to Arg-485 adopt a coiled-coil conformation. Low complexity predominate over residues Ser-497–Glu-521. Positions Ser-497 to Glu-528 are disordered.

It belongs to the FAM227 family.

This Rattus norvegicus (Rat) protein is Protein FAM227B (Fam227b).